Consider the following 495-residue polypeptide: Probable aspartic-type endopeptidase OPSB (495 aa).

The first 19 residues, 1–19 (MRGDSFIWSLATAIPLLST), serve as a signal peptide directing secretion. The Peptidase A1 domain maps to 73–408 (YFCNLTLGTP…DLDNNEISIA (336 aa)). N-linked (GlcNAc...) asparagine glycosylation is present at N76. D91 is an active-site residue. The N-linked (GlcNAc...) asparagine glycan is linked to N136. D290 is an active-site residue. A glycan (N-linked (GlcNAc...) asparagine) is linked at N413. The tract at residues 448 to 470 (TGLPGVETGVPGSRPPSSKAAGQ) is disordered. A lipid anchor (GPI-anchor amidated alanine) is attached at A467. Positions 468-495 (AGQAKRPDFVLGVAAVGLAGAGMLFAAM) are cleaved as a propeptide — removed in mature form.

The protein belongs to the peptidase A1 family.

It is found in the cell membrane. Its function is as follows. Probable GPI-anchored aspartic-type endopeptidase which contributes to virulence. This chain is Probable aspartic-type endopeptidase OPSB (OPSB), found in Trichophyton verrucosum (strain HKI 0517).